The primary structure comprises 313 residues: Cytochrome c biogenesis protein CcsA (313 aa).

Transmembrane regions (helical) follow at residues 9–29 (ILTHISFSIVSIVITIHLITF), 44–64 (GIIVTFFCITGLLVTRWVSSG), 71–91 (LYESLIFLSWSFSLIHIIPYF), 111–131 (GFATSGILTEIHQSGILVPAL), 143–163 (MILGYAALLCGSLLSVALLVI), 217–237 (VISLGFTFLTIGILSGAVWAN), 244–264 (WNWDPKETWAFITWIVFAIYL), and 278–298 (AIVASIGFLIIWICYFGVNLL).

It belongs to the CcmF/CycK/Ccl1/NrfE/CcsA family. May interact with Ccs1.

It is found in the plastid. Its subcellular location is the chloroplast thylakoid membrane. Functionally, required during biogenesis of c-type cytochromes (cytochrome c6 and cytochrome f) at the step of heme attachment. The sequence is that of Cytochrome c biogenesis protein CcsA from Solanum lycopersicum (Tomato).